A 284-amino-acid chain; its full sequence is 2-dehydro-3-deoxyphosphooctonate aldolase (284 aa).

This sequence belongs to the KdsA family.

Its subcellular location is the cytoplasm. It catalyses the reaction D-arabinose 5-phosphate + phosphoenolpyruvate + H2O = 3-deoxy-alpha-D-manno-2-octulosonate-8-phosphate + phosphate. The protein operates within carbohydrate biosynthesis; 3-deoxy-D-manno-octulosonate biosynthesis; 3-deoxy-D-manno-octulosonate from D-ribulose 5-phosphate: step 2/3. Its pathway is bacterial outer membrane biogenesis; lipopolysaccharide biosynthesis. The chain is 2-dehydro-3-deoxyphosphooctonate aldolase from Erwinia tasmaniensis (strain DSM 17950 / CFBP 7177 / CIP 109463 / NCPPB 4357 / Et1/99).